A 494-amino-acid chain; its full sequence is ATP synthase subunit beta (494 aa).

177–184 (GGAGVGKT) is a binding site for ATP.

This sequence belongs to the ATPase alpha/beta chains family. In terms of assembly, F-type ATPases have 2 components, CF(1) - the catalytic core - and CF(0) - the membrane proton channel. CF(1) has five subunits: alpha(3), beta(3), gamma(1), delta(1), epsilon(1). CF(0) has three main subunits: a(1), b(2) and c(9-12). The alpha and beta chains form an alternating ring which encloses part of the gamma chain. CF(1) is attached to CF(0) by a central stalk formed by the gamma and epsilon chains, while a peripheral stalk is formed by the delta and b chains.

Its subcellular location is the cell membrane. The enzyme catalyses ATP + H2O + 4 H(+)(in) = ADP + phosphate + 5 H(+)(out). Its function is as follows. Produces ATP from ADP in the presence of a proton gradient across the membrane. The catalytic sites are hosted primarily by the beta subunits. In Bifidobacterium adolescentis (strain ATCC 15703 / DSM 20083 / NCTC 11814 / E194a), this protein is ATP synthase subunit beta.